Reading from the N-terminus, the 1840-residue chain is Collagen alpha-1(V) chain (1840 aa).

The N-terminal stretch at methionine 1 to alanine 36 is a signal peptide. The Laminin G-like domain maps to aspartate 72 to cysteine 244. Positions arginine 231–glutamate 445 are nonhelical region. Tyrosine 234, tyrosine 236, tyrosine 240, tyrosine 262, tyrosine 263, and tyrosine 271 each carry sulfotyrosine. Disordered regions lie at residues proline 242–methionine 523, phenylalanine 528–glutamine 547, and glycine 561–glutamine 1576. The segment covering asparagine 258 to glycine 268 has biased composition (acidic residues). 2 stretches are compositionally biased toward low complexity: residues aspartate 335–aspartate 352 and threonine 376–asparagine 386. The segment at glycine 446–arginine 560 is interrupted collagenous region. Residues proline 472 to threonine 487 show a composition bias toward pro residues. Positions leucine 508–methionine 523 are enriched in low complexity. Over residues glycine 561 to proline 572 the composition is skewed to low complexity. The triple-helical region stretch occupies residues glycine 561–glycine 1572. 4-hydroxyproline is present on residues proline 572, proline 578, and proline 623. The residue at position 629 (lysine 629) is a 5-hydroxylysine. Proline 641 bears the 4-hydroxyproline mark. The residue at position 644 (lysine 644) is a 5-hydroxylysine. 4-hydroxyproline occurs at positions 650, 656, 659, 677, and 680. Low complexity predominate over residues proline 673–proline 688. 3-hydroxyproline occurs at positions 682 and 688. Residues lysine 689 to proline 698 are compositionally biased toward pro residues. Proline 692, proline 698, and proline 707 each carry 4-hydroxyproline. Position 710 is a 5-hydroxylysine (lysine 710). Proline 719, proline 722, proline 728, and proline 734 each carry 4-hydroxyproline. Low complexity predominate over residues glutamine 724–proline 743. At lysine 746 the chain carries 5-hydroxylysine. Positions leucine 749–proline 758 are enriched in low complexity. Residues proline 752, proline 758, proline 764, proline 767, and proline 773 each carry the 4-hydroxyproline modification. Lysine 776 bears the 5-hydroxylysine mark. A 4-hydroxyproline mark is found at proline 782 and proline 791. Residues lysine 797, lysine 806, lysine 809, and lysine 812 each carry the 5-hydroxylysine modification. A 4-hydroxyproline modification is found at proline 818. Residue lysine 821 is modified to 5-hydroxylysine. Position 836 is a 4-hydroxyproline (proline 836). A compositionally biased stretch (basic and acidic residues) spans arginine 839–lysine 848. A 5-hydroxylysine mark is found at lysine 848 and lysine 866. 4-hydroxyproline is present on residues proline 872, proline 875, and proline 878. At lysine 884 the chain carries 5-hydroxylysine. 4-hydroxyproline occurs at positions 890 and 893. 5-hydroxylysine is present on lysine 899. Proline 905 and proline 908 each carry 4-hydroxyproline. Low complexity predominate over residues proline 910–proline 919. Proline 932 and proline 947 each carry 4-hydroxyproline. 2 stretches are compositionally biased toward low complexity: residues lysine 973–threonine 992 and valine 1001–methionine 1013. 4 positions are modified to 4-hydroxyproline: proline 1019, proline 1022, proline 1025, and proline 1031. The span at serine 1090–proline 1106 shows a compositional bias: low complexity. Residues arginine 1108–proline 1117 show a composition bias toward pro residues. Residues proline 1223 and proline 1226 each carry the 4-hydroxyproline modification. Positions proline 1261 to proline 1270 are enriched in low complexity. A compositionally biased stretch (gly residues) spans glycine 1296–glycine 1305. Composition is skewed to pro residues over residues threonine 1382 to alanine 1400 and serine 1456 to leucine 1471. A 4-hydroxyproline mark is found at proline 1469 and proline 1472. Residues proline 1487–proline 1496 show a composition bias toward low complexity. Pro residues predominate over residues proline 1528–proline 1543. Over residues lysine 1544 to lysine 1556 the composition is skewed to low complexity. Residues glutamate 1573–alanine 1607 form a nonhelical region region. A sulfotyrosine mark is found at tyrosine 1603 and tyrosine 1606. One can recognise a Fibrillar collagen NC1 domain in the interval glutamate 1611–leucine 1839.

Belongs to the fibrillar collagen family. As to quaternary structure, trimers of two alpha 1(V) and one alpha 2(V) chains in most tissues and trimers of one alpha 1(V), one alpha 2(V), and one alpha 3(V) chains in placenta. Interacts with CSPG4. Post-translationally, hydroxylation on proline residues within the sequence motif, GXPG, is most likely to be 4-hydroxy as this fits the requirement for 4-hydroxylation in vertebrates. In terms of processing, sulfated on 40% of tyrosines. Ubiquitously expressed.

It localises to the secreted. The protein localises to the extracellular space. It is found in the extracellular matrix. Functionally, type V collagen is a member of group I collagen (fibrillar forming collagen). It is a minor connective tissue component of nearly ubiquitous distribution. Type V collagen binds to DNA, heparan sulfate, thrombospondin, heparin, and insulin. The sequence is that of Collagen alpha-1(V) chain (COL5A1) from Cricetulus longicaudatus (Long-tailed dwarf hamster).